The sequence spans 150 residues: FAD synthase (150 aa).

ATP contacts are provided by residues Thr-11 to Phe-12, His-16 to His-19, Asp-96, and Tyr-124.

The protein belongs to the archaeal FAD synthase family. As to quaternary structure, homodimer. Requires a divalent metal cation as cofactor.

The enzyme catalyses FMN + ATP + H(+) = FAD + diphosphate. Its pathway is cofactor biosynthesis; FAD biosynthesis; FAD from FMN: step 1/1. Functionally, catalyzes the transfer of the AMP portion of ATP to flavin mononucleotide (FMN) to produce flavin adenine dinucleotide (FAD) coenzyme. The protein is FAD synthase of Methanococcus maripaludis (strain C7 / ATCC BAA-1331).